The chain runs to 251 residues: Putative integrase/recombinase y4eF (251 aa).

The Core-binding (CB) domain maps to 1–40 (MLGREDIRTYQVYLANEKKLAPGSIHIALSALRFFFNVTL). Residues 58–231 (KLPIILSPDE…ATNKVCATES (174 aa)) form the Tyr recombinase domain. Active-site residues include Arg-93, Lys-118, His-183, Arg-186, and His-209. Tyr-218 acts as the O-(3'-phospho-DNA)-tyrosine intermediate in catalysis.

This sequence belongs to the 'phage' integrase family.

This is Putative integrase/recombinase y4eF from Sinorhizobium fredii (strain NBRC 101917 / NGR234).